A 660-amino-acid chain; its full sequence is DNA primase (660 aa).

The CHC2-type zinc finger occupies 40–64 (CPFHKEKTPSFTVSPDKQFYYCFGC). Residues 94–115 (GMEVPREQGRRDQKPRQPTDSP) are disordered. Basic and acidic residues predominate over residues 97–110 (VPREQGRRDQKPRQ). One can recognise a Toprim domain in the interval 261–343 (DEIIVVEGYM…GRRARFLFLP (83 aa)). Positions 267, 311, and 313 each coordinate Mg(2+). Disordered stretches follow at residues 425-449 (DPQQVEQLAQQAPATSSMPDYDPGY) and 476-519 (QAWK…APVE). The span at 428-442 (QVEQLAQQAPATSSM) shows a compositional bias: polar residues. Residues 488–498 (PWSDKPWDKNR) are compositionally biased toward basic and acidic residues.

This sequence belongs to the DnaG primase family. In terms of assembly, monomer. Interacts with DnaB. The cofactor is Zn(2+). Requires Mg(2+) as cofactor.

The enzyme catalyses ssDNA + n NTP = ssDNA/pppN(pN)n-1 hybrid + (n-1) diphosphate.. In terms of biological role, RNA polymerase that catalyzes the synthesis of short RNA molecules used as primers for DNA polymerase during DNA replication. The polypeptide is DNA primase (Pseudomonas putida (strain ATCC 47054 / DSM 6125 / CFBP 8728 / NCIMB 11950 / KT2440)).